The following is a 667-amino-acid chain: Probable potassium transport system protein Kup (667 aa).

The next 12 membrane-spanning stretches (helical) occupy residues 5–25, 47–67, 88–108, 133–153, 164–184, 210–230, 243–263, 287–307, 336–356, 367–387, 393–413, and 420–440; these read GLLIAIGIVYGDIGTSPLYVM, ISLILWTVTLLTTVQTVIIAL, AAWLVWPALIGGAAILADGTL, VSNQTTVLVITIVILLVLFSI, AFGPIMLVWFAFLGVMGLINI, AGFAILGSIFLATTGAEALYS, SWPFVFVCLSLNYFGQGVWIL, LASIVLATLAAIIASQALITG, IYIPAVNKMLGITTIALVLFF, GLSITISMLTTTILLYEWLVL, LANLLFVIFFSTINILFMGSS, and GGYVSLLITLLIASVMVVWYF.

The protein belongs to the HAK/KUP transporter (TC 2.A.72) family.

It localises to the cell membrane. It carries out the reaction K(+)(in) + H(+)(in) = K(+)(out) + H(+)(out). Transport of potassium into the cell. Likely operates as a K(+):H(+) symporter. The chain is Probable potassium transport system protein Kup from Lactobacillus delbrueckii subsp. bulgaricus (strain ATCC 11842 / DSM 20081 / BCRC 10696 / JCM 1002 / NBRC 13953 / NCIMB 11778 / NCTC 12712 / WDCM 00102 / Lb 14).